Here is a 113-residue protein sequence, read N- to C-terminus: Ig kappa chain V-II region 7S34.1 (113 aa).

The framework-1 stretch occupies residues 1-23 (DIVMTQTAPSALVTPGESVSISC). Residues cysteine 23 and cysteine 93 are joined by a disulfide bond. A complementarity-determining-1 region spans residues 24–39 (RSSKSLLHSNGNTYLY). Residues 40–54 (WFLQRPGQCPQLLIY) form a framework-2 region. The complementarity-determining-2 stretch occupies residues 55–61 (RMSNLAS). A framework-3 region spans residues 62-93 (GVPDRFSGSGSGTAFTLRISRVEAEDVGVYYC). Residues 94-102 (MQQREYPYT) form a complementarity-determining-3 region. The interval 103–112 (FGGGTKLEIK) is framework-4.

The polypeptide is Ig kappa chain V-II region 7S34.1 (Mus musculus (Mouse)).